Reading from the N-terminus, the 360-residue chain is Teichoic acids export ATP-binding protein TagH (360 aa).

In terms of domain architecture, ABC transporter spans 24-245 (LKAMFFPKTR…YEDYINWFNK (222 aa)). 59–66 (GINGSGKS) contributes to the ATP binding site. Residues 246–360 (LSKEEKEAHK…GDIDNSDVSL (115 aa)) form a unknown region. Residues 270 to 290 (EEQENGKAGSGGDGTQPIVQP) are disordered.

This sequence belongs to the ABC transporter superfamily. Teichoic acids exporter (TC 3.A.1.104.1) family. As to quaternary structure, the complex is composed of two ATP-binding proteins (TagH) and two transmembrane proteins (TagG).

The protein localises to the cell membrane. The catalysed reaction is ATP + H2O + teichoic acidSide 1 = ADP + phosphate + teichoic acidSide 2.. Functionally, part of the ABC transporter complex TagGH involved in teichoic acids export. Responsible for energy coupling to the transport system. This chain is Teichoic acids export ATP-binding protein TagH, found in Shouchella clausii (strain KSM-K16) (Alkalihalobacillus clausii).